The primary structure comprises 187 residues: Pseudo histidine-containing phosphotransfer protein 1 (187 aa).

The region spanning 74–169 (SPNFVEEVVT…AVLRQKLESY (96 aa)) is the HPt domain.

Functionally, functions as a two-component phosphorelay mediator between cytokinin sensor histidine kinases and response regulators (B-type ARRs). Plays an important role in propagating cytokinin signal transduction. This Oryza sativa subsp. japonica (Rice) protein is Pseudo histidine-containing phosphotransfer protein 1.